The following is a 513-amino-acid chain: Nucleolar protein 58 (513 aa).

The Nop domain occupies 283–403 (IAPNLTQLVG…VENRLSQIEG (121 aa)). Residues 424 to 513 (ARAYNADADT…KEKKEKKSKK (90 aa)) are disordered. The span at 438-448 (DSDDEDEETEE) shows a compositional bias: acidic residues. Over residues 471-513 (KSKKEKKEKKEKKDKKEKKEKKEKKDKKEKKEKKEKKEKKSKK) the composition is skewed to basic residues.

The protein belongs to the NOP5/NOP56 family.

The protein localises to the nucleus. The protein resides in the nucleolus. Functionally, required for pre-18S rRNA processing. May bind microtubules. This chain is Nucleolar protein 58 (NOP58), found in Candida glabrata (strain ATCC 2001 / BCRC 20586 / JCM 3761 / NBRC 0622 / NRRL Y-65 / CBS 138) (Yeast).